An 82-amino-acid chain; its full sequence is RNA-binding protein Hfq (82 aa).

The region spanning 10–70 (DLFLNTVRKS…ISTIMPSQPV (61 aa)) is the Sm domain.

The protein belongs to the Hfq family. As to quaternary structure, homohexamer.

Functionally, RNA chaperone that binds small regulatory RNA (sRNAs) and mRNAs to facilitate mRNA translational regulation in response to envelope stress, environmental stress and changes in metabolite concentrations. Also binds with high specificity to tRNAs. In Chelativorans sp. (strain BNC1), this protein is RNA-binding protein Hfq.